The following is a 110-amino-acid chain: T cell receptor alpha variable 39 (110 aa).

Residues 1-18 form the signal peptide; that stretch reads MKKLLAMILWLQLDRLSG. The region spanning 19-110 is the Ig-like domain; the sequence is ELKVEQNPLF…LSATYFCAVD (92 aa). N-linked (GlcNAc...) asparagine glycosylation is found at Asn36 and Asn42. Cysteines 41 and 107 form a disulfide.

As to quaternary structure, alpha-beta TR is a heterodimer composed of an alpha and beta chain; disulfide-linked. The alpha-beta TR is associated with the transmembrane signaling CD3 coreceptor proteins to form the TR-CD3 (TcR or TCR). The assembly of alpha-beta TR heterodimers with CD3 occurs in the endoplasmic reticulum where a single alpha-beta TR heterodimer associates with one CD3D-CD3E heterodimer, one CD3G-CD3E heterodimer and one CD247 homodimer forming a stable octameric structure. CD3D-CD3E and CD3G-CD3E heterodimers preferentially associate with TR alpha and TR beta chains, respectively. The association of the CD247 homodimer is the last step of TcR assembly in the endoplasmic reticulum and is required for transport to the cell surface.

Its subcellular location is the cell membrane. In terms of biological role, v region of the variable domain of T cell receptor (TR) alpha chain that participates in the antigen recognition. Alpha-beta T cell receptors are antigen specific receptors which are essential to the immune response and are present on the cell surface of T lymphocytes. Recognize peptide-major histocompatibility (MH) (pMH) complexes that are displayed by antigen presenting cells (APC), a prerequisite for efficient T cell adaptive immunity against pathogens. Binding of alpha-beta TR to pMH complex initiates TR-CD3 clustering on the cell surface and intracellular activation of LCK that phosphorylates the ITAM motifs of CD3G, CD3D, CD3E and CD247 enabling the recruitment of ZAP70. In turn ZAP70 phosphorylates LAT, which recruits numerous signaling molecules to form the LAT signalosome. The LAT signalosome propagates signal branching to three major signaling pathways, the calcium, the mitogen-activated protein kinase (MAPK) kinase and the nuclear factor NF-kappa-B (NF-kB) pathways, leading to the mobilization of transcription factors that are critical for gene expression and essential for T cell growth and differentiation. The T cell repertoire is generated in the thymus, by V-(D)-J rearrangement. This repertoire is then shaped by intrathymic selection events to generate a peripheral T cell pool of self-MH restricted, non-autoaggressive T cells. Post-thymic interaction of alpha-beta TR with the pMH complexes shapes TR structural and functional avidity. The chain is T cell receptor alpha variable 39 from Homo sapiens (Human).